A 429-amino-acid chain; its full sequence is Serine hydroxymethyltransferase (429 aa).

(6S)-5,6,7,8-tetrahydrofolate contacts are provided by residues Leu-126 and 130 to 132 (GHL). At Lys-235 the chain carries N6-(pyridoxal phosphate)lysine. 359–361 (SPF) is a (6S)-5,6,7,8-tetrahydrofolate binding site.

Belongs to the SHMT family. In terms of assembly, homodimer. It depends on pyridoxal 5'-phosphate as a cofactor.

It is found in the cytoplasm. The enzyme catalyses (6R)-5,10-methylene-5,6,7,8-tetrahydrofolate + glycine + H2O = (6S)-5,6,7,8-tetrahydrofolate + L-serine. The protein operates within one-carbon metabolism; tetrahydrofolate interconversion. Its pathway is amino-acid biosynthesis; glycine biosynthesis; glycine from L-serine: step 1/1. In terms of biological role, catalyzes the reversible interconversion of serine and glycine with tetrahydrofolate (THF) serving as the one-carbon carrier. This reaction serves as the major source of one-carbon groups required for the biosynthesis of purines, thymidylate, methionine, and other important biomolecules. Also exhibits THF-independent aldolase activity toward beta-hydroxyamino acids, producing glycine and aldehydes, via a retro-aldol mechanism. The protein is Serine hydroxymethyltransferase of Synechococcus sp. (strain CC9311).